The chain runs to 275 residues: Elongation factor Ts (275 aa).

An involved in Mg(2+) ion dislocation from EF-Tu region spans residues 76-79 (TDFV).

Belongs to the EF-Ts family.

The protein localises to the cytoplasm. Associates with the EF-Tu.GDP complex and induces the exchange of GDP to GTP. It remains bound to the aminoacyl-tRNA.EF-Tu.GTP complex up to the GTP hydrolysis stage on the ribosome. In Rhodococcus jostii (strain RHA1), this protein is Elongation factor Ts.